A 136-amino-acid polypeptide reads, in one-letter code: Histone H3-like 3 (136 aa).

Residues 1–15 are compositionally biased toward basic residues; it reads MARTKQTARKSHGGK. The disordered stretch occupies residues 1–42; the sequence is MARTKQTARKSHGGKAPRTLLATKAARKSAPTTGGVKKPHRY. Residues Lys5 and Lys10 each carry the N6,N6,N6-trimethyllysine; alternate modification. N6,N6-dimethyllysine; alternate occurs at positions 5 and 10. Residues Lys5 and Lys10 each carry the N6-methyllysine; alternate modification. Lys10 carries the post-translational modification N6-acetyllysine; alternate. Ser11 carries the post-translational modification Phosphoserine. Lys15 bears the N6-acetyllysine mark. An N6-methyllysine; alternate mark is found at Lys24 and Lys28. Position 24 is an N6-acetyllysine; alternate (Lys24). N6,N6,N6-trimethyllysine; alternate is present on Lys28. Position 28 is an N6,N6-dimethyllysine; alternate (Lys28). Ser29 carries the post-translational modification Phosphoserine. Lys37 carries the N6,N6,N6-trimethyllysine; alternate modification. At Lys37 the chain carries N6,N6-dimethyllysine; alternate. Lys37 carries the N6-methyllysine; alternate modification.

It belongs to the histone H3 family. In terms of assembly, the nucleosome is a histone octamer containing two molecules each of H2A, H2B, H3 and H4 assembled in one H3-H4 heterotetramer and two H2A-H2B heterodimers. The octamer wraps approximately 147 bp of DNA. Expressed in roots, seedlings, leaves and open flowers.

The protein localises to the nucleus. The protein resides in the chromosome. Its function is as follows. Core component of nucleosome. Nucleosomes wrap and compact DNA into chromatin, limiting DNA accessibility to the cellular machineries which require DNA as a template. Histones thereby play a central role in transcription regulation, DNA repair, DNA replication and chromosomal stability. DNA accessibility is regulated via a complex set of post-translational modifications of histones, also called histone code, and nucleosome remodeling. The protein is Histone H3-like 3 of Arabidopsis thaliana (Mouse-ear cress).